The sequence spans 213 residues: Pyridoxine/pyridoxamine 5'-phosphate oxidase (213 aa).

Substrate contacts are provided by residues 9–12 (RKDY) and K67. Residues 62–67 (RIVLLK), 77–78 (FT), R83, K84, and Q106 each bind FMN. 3 residues coordinate substrate: Y124, R128, and S132. FMN-binding positions include 141 to 142 (QS) and W186. Residue 192–194 (RLH) coordinates substrate. FMN is bound at residue R196.

Belongs to the pyridoxamine 5'-phosphate oxidase family. Homodimer. FMN serves as cofactor.

The catalysed reaction is pyridoxamine 5'-phosphate + O2 + H2O = pyridoxal 5'-phosphate + H2O2 + NH4(+). The enzyme catalyses pyridoxine 5'-phosphate + O2 = pyridoxal 5'-phosphate + H2O2. The protein operates within cofactor metabolism; pyridoxal 5'-phosphate salvage; pyridoxal 5'-phosphate from pyridoxamine 5'-phosphate: step 1/1. It functions in the pathway cofactor metabolism; pyridoxal 5'-phosphate salvage; pyridoxal 5'-phosphate from pyridoxine 5'-phosphate: step 1/1. Functionally, catalyzes the oxidation of either pyridoxine 5'-phosphate (PNP) or pyridoxamine 5'-phosphate (PMP) into pyridoxal 5'-phosphate (PLP). The protein is Pyridoxine/pyridoxamine 5'-phosphate oxidase of Cyanothece sp. (strain PCC 7425 / ATCC 29141).